A 252-amino-acid chain; its full sequence is Trans-aconitate 2-methyltransferase (252 aa).

It belongs to the methyltransferase superfamily. Tam family.

The protein resides in the cytoplasm. The catalysed reaction is trans-aconitate + S-adenosyl-L-methionine = (E)-3-(methoxycarbonyl)pent-2-enedioate + S-adenosyl-L-homocysteine. Its function is as follows. Catalyzes the S-adenosylmethionine monomethyl esterification of trans-aconitate. The sequence is that of Trans-aconitate 2-methyltransferase from Escherichia coli (strain SE11).